Here is a 233-residue protein sequence, read N- to C-terminus: MKMKLVTAAVMGLAMSTAMAATDATSLATDKDKLSYSIGADLGKNFKNQGIDVNPEAMAKGMQDAMSGAQLALTEQQMKDVLNKFQKDLMAKRTAEFNKKADENKVKGEAFLTENKNKPGVVVLPSGLQYKVINSGNGVKPGKSDTVTVEYTGRLIDGTVFDSTEKTGKPATFQVSQVIPGWTEALQLMPAGSTWEIYVPSGLAYGPRSVGGPIGPNETLIFKIHLISVKKSS.

The signal sequence occupies residues 1 to 20 (MKMKLVTAAVMGLAMSTAMA). Residues 144–233 (SDTVTVEYTG…IHLISVKKSS (90 aa)) enclose the PPIase FKBP-type domain.

Belongs to the FKBP-type PPIase family.

It localises to the cell outer membrane. The catalysed reaction is [protein]-peptidylproline (omega=180) = [protein]-peptidylproline (omega=0). Strongly inhibited by FK506 but is completely resistant to cyclosporin A. In terms of biological role, essential virulence factor associated with macrophage infectivity. Exhibits PPIase activity. This chain is Outer membrane protein MIP (mip), found in Legionella pneumophila subsp. pneumophila (strain Philadelphia 1 / ATCC 33152 / DSM 7513).